A 638-amino-acid chain; its full sequence is Signal recognition particle receptor subunit alpha (638 aa).

2 disordered regions span residues 132-244 and 283-316; these read APTT…GKKA and GTGSGGQLQDLDCSSSDDEGAAQNSTKPSATKGT. Basic and acidic residues-rich tracts occupy residues 137–146 and 153–165; these read KKFEDSEKAK and IETRGEKPKEKAK. Position 177 is a phosphoserine (Ser177). The segment covering 204-239 has biased composition (basic and acidic residues); the sequence is LSKEELIRRKREEFIQKHGRGMEKSNKSTKSDAPKE. Thr284 is subject to Phosphothreonine. 3 positions are modified to phosphoserine: Ser296, Ser297, and Ser298. The segment covering 304 to 314 has biased composition (polar residues); the sequence is AQNSTKPSATK. The segment at 419–636 is NG domain; sequence YVVTFCGVNG…NAKAVVAALM (218 aa). Position 425–432 (425–432) interacts with GTP; sequence GVNGVGKS. Residue Ser473 is modified to Phosphoserine. 520-524 provides a ligand contact to GTP; it reads DTAGR. Thr578 is subject to Phosphothreonine. A GTP-binding site is contributed by 588-591; it reads TKFD.

It belongs to the GTP-binding SRP family. In terms of assembly, heterodimer with SRPRB. Interacts with the signal recognition particle (SRP) complex subunit SRP54. As to quaternary structure, (Microbial infection) May interact with Zika virus strain Mr-766 non-structural protein 4A/NS4A. May interact with Zika virus French Polynesia 10087PF/2013 non-structural protein 4A/NS4A. (Microbial infection) May interact with Dengue virus DENV2 16681 non-structural protein 4A/NS4A.

The protein localises to the endoplasmic reticulum membrane. In terms of biological role, component of the signal recognition particle (SRP) complex receptor (SR). Ensures, in conjunction with the SRP complex, the correct targeting of the nascent secretory proteins to the endoplasmic reticulum membrane system. Forms a guanosine 5'-triphosphate (GTP)-dependent complex with the SRP subunit SRP54. SRP receptor compaction and GTPase rearrangement drive SRP-mediated cotranslational protein translocation into the ER. The polypeptide is Signal recognition particle receptor subunit alpha (Homo sapiens (Human)).